Here is a 451-residue protein sequence, read N- to C-terminus: Tetraspanin-14 (451 aa).

Residues 1-56 are Cytoplasmic-facing; that stretch reads MPHRAPRRFMKTAPGACDWEQCLLMGSGEPTRARAVVSSSHKQRKPRQEISACLKW. Residues 20–24 carry the Basolateral membrane targeting motif; sequence EQCLL. A helical membrane pass occupies residues 57–77; the sequence is LVFLLNSIVFLVGVGILALGV. Residues 78–96 are Extracellular-facing; that stretch reads YLFIKDFREVKLVDIILNP. The chain crosses the membrane as a helical span at residues 97 to 117; that stretch reads AILISIFGFSICVVSFFGFMG. Residues 118–130 lie on the Cytoplasmic side of the membrane; the sequence is ALRDNIFLLKCFA. Residues 131–151 form a helical membrane-spanning segment; the sequence is ACVFLSYILVVAVTLVFFTLF. Over 152–285 the chain is Extracellular; sequence YTDTTEGLSA…QPLRTLFESH (134 aa). N-linked (GlcNAc...) asparagine glycosylation is found at N205 and N211. Residues 286–306 form a helical membrane-spanning segment; the sequence is AVHVGAFVALLIVPVCISVCL. Residues 307 to 451 lie on the Cytoplasmic side of the membrane; that stretch reads TNILAKQVDH…TDLVPQKSKS (145 aa). Positions 328 to 451 are disordered; that stretch reads NDRRRKRDHN…TDLVPQKSKS (124 aa). Pro residues predominate over residues 366–376; sequence PDIPPPLPPIE. Low complexity predominate over residues 410 to 434; sequence ATTTRTPPAAAGPAPTPQATTTNRT. The span at 435–444 shows a compositional bias: polar residues; the sequence is HQWVLQQTDL.

This sequence belongs to the tetraspanin (TM4SF) family. Expressed in the germline, particularly in sperm cells. As to expression, expressed in the germline (particularly in sperm cells), anterior sensory cilia, hypodermis and vulva (at protein level). In terms of tissue distribution, expressed in the pharynx, hypodermis and vulva (at protein level).

Its subcellular location is the cell membrane. It localises to the cytoplasmic vesicle membrane. It is found in the endosome membrane. The protein localises to the early endosome membrane. The protein resides in the late endosome membrane. Its subcellular location is the recycling endosome membrane. It localises to the apical cell membrane. It is found in the basolateral cell membrane. Its function is as follows. Functions redundantly with tsp-12 to regulate cell surface levels of the BMP type II receptor daf-4 (but not BMP type I receptor sma-6), probably by regulating endosomal sorting and recycling of receptors, preventing their targeting to degradative lysosomes. Together with tsp-12, regulates cell fate specification in the postembryonic mesodermal M lineage, body size, male development and vulva development, probably by positively modulating BMP-like Sma/Mab signaling. Together with tsp-12 involved in maintaining the structural and functional integrity of the endosomal network. Together with tsp-12, probably acts by modulating the activation of glp-1, Notch-like receptor, to regulate germline maturation. Functions redundantly with tsp-12 to regulate cell fate specification in the postembryonic mesodermal M lineage, body size, embryonic and vulva development. In terms of biological role, functions redundantly with tsp-12 to regulate cell fate specification in the postembryonic mesodermal M lineage. Likely plays a complementary role in mesodermal development with tsp-14 isoform a, but may be more critical. The protein is Tetraspanin-14 of Caenorhabditis elegans.